Here is a 217-residue protein sequence, read N- to C-terminus: GrpE protein homolog 1, mitochondrial (217 aa).

A mitochondrion-targeting transit peptide spans methionine 1 to leucine 27. Positions glycine 37–alanine 56 are disordered. Lysine 94 bears the N6-acetyllysine; alternate mark. Lysine 94 carries the N6-succinyllysine; alternate modification. Lysine 100 carries the N6-acetyllysine modification. Residue lysine 120 is modified to N6-succinyllysine. Position 215 is an N6-acetyllysine; alternate (lysine 215). Lysine 215 is modified (N6-succinyllysine; alternate).

The protein belongs to the GrpE family. As to quaternary structure, probable component of the PAM complex at least composed of a mitochondrial HSP70 protein, GRPEL1 or GRPEL2, TIMM44, TIMM16/PAM16 and TIMM14/DNAJC19. Binds to HSP70, HSC70 and HSJ1B.

It is found in the mitochondrion matrix. Essential component of the PAM complex, a complex required for the translocation of transit peptide-containing proteins from the inner membrane into the mitochondrial matrix in an ATP-dependent manner. Seems to control the nucleotide-dependent binding of mitochondrial HSP70 to substrate proteins. This chain is GrpE protein homolog 1, mitochondrial (Grpel1), found in Mus musculus (Mouse).